Here is a 522-residue protein sequence, read N- to C-terminus: F-box-like/WD repeat-containing protein TBL1Y (522 aa).

Ser-2 is modified (N-acetylserine). Residues 4 to 36 form the LisH domain; the sequence is TSDEVNFLVYRYLQESGFSHSAFTFGIESHISQ. The F-box-like domain maps to 41–86; sequence GTLVPPSALISILQKGLQYVEAEISINKDGTVFDSRPIESLSLIVA. N6-acetyllysine is present on Lys-102. Ser-130 carries the post-translational modification Phosphoserine. WD repeat units follow at residues 177 to 216, 233 to 272, 274 to 313, 316 to 354, 357 to 396, 399 to 447, 450 to 489, and 491 to 521; these read GHES…NGGS, PSNK…ASTL, QHKG…AKQQ, FHSA…PVKT, GHTN…CVHD, AHSK…CTHT, KHQE…LVHS, and QGTG…CVLD. Residue Lys-287 forms a Glycyl lysine isopeptide (Lys-Gly) (interchain with G-Cter in SUMO2) linkage.

Belongs to the WD repeat EBI family. Probable component of the N-Cor repressor complex and some E3 ubiquitin ligase complex. Interacts with NCOR2. As to expression, fetal brain and prostate. Expressed in the cochlear spiral ganglion neurons, and in outer and inner hair cells.

It localises to the nucleus. Functionally, F-box-like protein involved in the recruitment of the ubiquitin/19S proteasome complex to nuclear receptor-regulated transcription units. Plays an essential role in transcription activation mediated by nuclear receptors. Probably acts as integral component of corepressor complexes that mediates the recruitment of the 19S proteasome complex, leading to the subsequent proteasomal degradation of transcription repressor complexes, thereby allowing cofactor exchange. In Homo sapiens (Human), this protein is F-box-like/WD repeat-containing protein TBL1Y (TBL1Y).